Consider the following 305-residue polypeptide: GTPase Era (305 aa).

An Era-type G domain is found at 11–181 (RSGFVSFVGR…IKVMTDLLPE (171 aa)). Positions 19–26 (GRPNTGKS) are G1. 19–26 (GRPNTGKS) lines the GTP pocket. A G2 region spans residues 45-49 (ETTRH). The interval 66–69 (DTPG) is G3. GTP is bound by residues 66–70 (DTPGL) and 130–133 (TKAD). A G4 region spans residues 130–133 (TKAD). The interval 160–162 (VSS) is G5. Residues 212 to 291 (LKNELPHSVA…FLDLRIKVLK (80 aa)) enclose the KH type-2 domain.

It belongs to the TRAFAC class TrmE-Era-EngA-EngB-Septin-like GTPase superfamily. Era GTPase family. Monomer.

Its subcellular location is the cytoplasm. The protein resides in the cell membrane. An essential GTPase that binds both GDP and GTP, with rapid nucleotide exchange. Plays a role in 16S rRNA processing and 30S ribosomal subunit biogenesis and possibly also in cell cycle regulation and energy metabolism. The polypeptide is GTPase Era (Corynebacterium glutamicum (strain ATCC 13032 / DSM 20300 / JCM 1318 / BCRC 11384 / CCUG 27702 / LMG 3730 / NBRC 12168 / NCIMB 10025 / NRRL B-2784 / 534)).